Reading from the N-terminus, the 492-residue chain is Cobyric acid synthase (492 aa).

The GATase cobBQ-type domain occupies 253 to 441; that stretch reads VLKVIAPVYP…LHGLFDTPQA (189 aa). The active-site Nucleophile is cysteine 334. Histidine 433 is an active-site residue.

This sequence belongs to the CobB/CobQ family. CobQ subfamily.

Its pathway is cofactor biosynthesis; adenosylcobalamin biosynthesis. Its function is as follows. Catalyzes amidations at positions B, D, E, and G on adenosylcobyrinic A,C-diamide. NH(2) groups are provided by glutamine, and one molecule of ATP is hydrogenolyzed for each amidation. The protein is Cobyric acid synthase of Azoarcus sp. (strain BH72).